The sequence spans 117 residues: Immunoglobulin heavy variable 3-48 (117 aa).

The N-terminal stretch at 1–19 (MELGLCWVFLVAILEGVQC) is a signal peptide. A framework-1 region spans residues 20 to 44 (EVQLVESGGGLVQPGGSLRLSCAAS). In terms of domain architecture, Ig-like spans 20-117 (EVQLVESGGG…EDTAVYYCAR (98 aa)). An intrachain disulfide couples Cys41 to Cys115. The tract at residues 45–52 (GFTFSSYE) is complementarity-determining-1. The framework-2 stretch occupies residues 53 to 69 (MNWVRQAPGKGLEWVSY). Positions 70-77 (ISSSGSTI) are complementarity-determining-2. Positions 78-115 (YYADSVKGRFTISRDNAKNSLYLQMNSLRAEDTAVYYC) are framework-3. Positions 116–117 (AR) are complementarity-determining-3.

Immunoglobulins are composed of two identical heavy chains and two identical light chains; disulfide-linked. The N-terminus is blocked.

The protein resides in the secreted. The protein localises to the cell membrane. Its function is as follows. V region of the variable domain of immunoglobulin heavy chains that participates in the antigen recognition. Immunoglobulins, also known as antibodies, are membrane-bound or secreted glycoproteins produced by B lymphocytes. In the recognition phase of humoral immunity, the membrane-bound immunoglobulins serve as receptors which, upon binding of a specific antigen, trigger the clonal expansion and differentiation of B lymphocytes into immunoglobulins-secreting plasma cells. Secreted immunoglobulins mediate the effector phase of humoral immunity, which results in the elimination of bound antigens. The antigen binding site is formed by the variable domain of one heavy chain, together with that of its associated light chain. Thus, each immunoglobulin has two antigen binding sites with remarkable affinity for a particular antigen. The variable domains are assembled by a process called V-(D)-J rearrangement and can then be subjected to somatic hypermutations which, after exposure to antigen and selection, allow affinity maturation for a particular antigen. In Homo sapiens (Human), this protein is Immunoglobulin heavy variable 3-48.